Consider the following 78-residue polypeptide: Conotoxin 5 (78 aa).

A signal peptide spans 1 to 22; that stretch reads MKLTCMMIVTVLFLTAWIFITA. A propeptide spanning residues 23–49 is cleaved from the precursor; that stretch reads DNSRNGIENLPRMRRHEMKNPKASKLN. 3 disulfides stabilise this stretch: Cys53-Cys69, Cys60-Cys73, and Cys68-Cys77.

This sequence belongs to the conotoxin O1 superfamily. As to expression, expressed by the venom duct.

Its subcellular location is the secreted. This Conus imperialis (Imperial cone) protein is Conotoxin 5.